Here is a 326-residue protein sequence, read N- to C-terminus: Tetraacyldisaccharide 4'-kinase (326 aa).

ATP is bound at residue 53–60 (SVGGNGKT).

The protein belongs to the LpxK family.

It catalyses the reaction a lipid A disaccharide + ATP = a lipid IVA + ADP + H(+). The protein operates within glycolipid biosynthesis; lipid IV(A) biosynthesis; lipid IV(A) from (3R)-3-hydroxytetradecanoyl-[acyl-carrier-protein] and UDP-N-acetyl-alpha-D-glucosamine: step 6/6. Transfers the gamma-phosphate of ATP to the 4'-position of a tetraacyldisaccharide 1-phosphate intermediate (termed DS-1-P) to form tetraacyldisaccharide 1,4'-bis-phosphate (lipid IVA). The protein is Tetraacyldisaccharide 4'-kinase of Actinobacillus pleuropneumoniae serotype 5b (strain L20).